The following is a 143-amino-acid chain: FAD synthase (143 aa).

Residues 9–10 (TF), 14–17 (HPGH), and aspartate 92 each bind ATP.

Belongs to the archaeal FAD synthase family. In terms of assembly, homodimer. It depends on a divalent metal cation as a cofactor.

The enzyme catalyses FMN + ATP + H(+) = FAD + diphosphate. The protein operates within cofactor biosynthesis; FAD biosynthesis; FAD from FMN: step 1/1. Functionally, catalyzes the transfer of the AMP portion of ATP to flavin mononucleotide (FMN) to produce flavin adenine dinucleotide (FAD) coenzyme. The polypeptide is FAD synthase (Methanococcoides burtonii (strain DSM 6242 / NBRC 107633 / OCM 468 / ACE-M)).